A 508-amino-acid chain; its full sequence is Mitochondrial distribution and morphology protein 10 (508 aa).

Residues proline 160–asparagine 195 form a disordered region.

Belongs to the MDM10 family. In terms of assembly, component of the ER-mitochondria encounter structure (ERMES) or MDM complex, composed of MMM1, MDM10, MDM12 and MDM34. Associates with the mitochondrial outer membrane sorting assembly machinery SAM(core) complex.

The protein resides in the mitochondrion outer membrane. Component of the ERMES/MDM complex, which serves as a molecular tether to connect the endoplasmic reticulum and mitochondria. Components of this complex are involved in the control of mitochondrial shape and protein biogenesis and may function in phospholipid exchange. MDM10 is involved in the late assembly steps of the general translocase of the mitochondrial outer membrane (TOM complex). Functions in the TOM40-specific route of the assembly of outer membrane beta-barrel proteins, including the association of TOM40 with the receptor TOM22 and small TOM proteins. Can associate with the SAM(core) complex as well as the MDM12-MMM1 complex, both involved in late steps of the major beta-barrel assembly pathway, that is responsible for biogenesis of all outer membrane beta-barrel proteins. May act as a switch that shuttles between both complexes and channels precursor proteins into the TOM40-specific pathway. Plays a role in mitochondrial morphology and in the inheritance of mitochondria. The sequence is that of Mitochondrial distribution and morphology protein 10 from Cryptococcus neoformans var. neoformans serotype D (strain B-3501A) (Filobasidiella neoformans).